Here is a 539-residue protein sequence, read N- to C-terminus: Sporozoite-associated protein (539 aa).

Asn-31, Asn-90, Asn-102, Asn-149, and Asn-167 each carry an N-linked (GlcNAc...) asparagine glycan. Residues Leu-126 to Thr-153 form a disordered region. A compositionally biased stretch (low complexity) spans Val-192 to Asn-215. The tract at residues Val-192 to Ser-231 is disordered. Over residues Ala-216–Thr-228 the composition is skewed to polar residues. N-linked (GlcNAc...) asparagine glycans are attached at residues Asn-217, Asn-271, and Asn-288. Positions Thr-303–Ser-355 are disordered. Positions Asp-320–Arg-332 are enriched in polar residues. N-linked (GlcNAc...) asparagine glycans are attached at residues Asn-427 and Asn-503.

In terms of tissue distribution, saliva (at protein level). Female salivary gland. Female midgut.

It localises to the secreted. Functionally, binds heparan sulfate proteoglycans present on the mammalian cell surface. Modulates host immune responses at the site of inoculation via decreasing the expression of TNF-alpha/TNF, IL-1beta/IL1B, IFN-gamma/IFNG, IL4, MMP9, TGF-beta and ICAM1. (Microbial infection) Interacts with the surface of Plasmodium berghei sporozoites. Promotes Plasmodium berghei transmission to the mouse host. Does not affect Plasmodium berghei sporozoite viability. Its function is as follows. (Microbial infection) Interacts with the surface of Plasmodium falciparum sporozoites. This is Sporozoite-associated protein from Anopheles gambiae (African malaria mosquito).